We begin with the raw amino-acid sequence, 335 residues long: Beta-ketoacyl-[acyl-carrier-protein] synthase III (335 aa).

Residues C119 and H261 contribute to the active site. The ACP-binding stretch occupies residues Q262–R266. The active site involves N291.

It belongs to the thiolase-like superfamily. FabH family. As to quaternary structure, homodimer.

Its subcellular location is the cytoplasm. It catalyses the reaction malonyl-[ACP] + acetyl-CoA + H(+) = 3-oxobutanoyl-[ACP] + CO2 + CoA. It participates in lipid metabolism; fatty acid biosynthesis. Functionally, catalyzes the condensation reaction of fatty acid synthesis by the addition to an acyl acceptor of two carbons from malonyl-ACP. Catalyzes the first condensation reaction which initiates fatty acid synthesis and may therefore play a role in governing the total rate of fatty acid production. Possesses both acetoacetyl-ACP synthase and acetyl transacylase activities. Its substrate specificity determines the biosynthesis of branched-chain and/or straight-chain of fatty acids. This is Beta-ketoacyl-[acyl-carrier-protein] synthase III from Prochlorococcus marinus (strain MIT 9515).